We begin with the raw amino-acid sequence, 100 residues long: Small ribosomal subunit protein uS14c (100 aa).

It belongs to the universal ribosomal protein uS14 family. Part of the 30S ribosomal subunit.

It localises to the plastid. The protein localises to the chloroplast. Functionally, binds 16S rRNA, required for the assembly of 30S particles. The sequence is that of Small ribosomal subunit protein uS14c from Chlorella vulgaris (Green alga).